The chain runs to 349 residues: Probable dual-specificity RNA methyltransferase RlmN (349 aa).

Glu94 serves as the catalytic Proton acceptor. The 225-residue stretch at 100–324 (YKTHTSICLS…NKNNVNTTIR (225 aa)) folds into the Radical SAM core domain. The cysteines at positions 107 and 335 are disulfide-linked. [4Fe-4S] cluster-binding residues include Cys114, Cys118, and Cys121. S-adenosyl-L-methionine is bound by residues 161-162 (GE), Ser193, 216-218 (SLH), and Asn292. The active-site S-methylcysteine intermediate is Cys335.

This sequence belongs to the radical SAM superfamily. RlmN family. Requires [4Fe-4S] cluster as cofactor.

Its subcellular location is the cytoplasm. The catalysed reaction is adenosine(2503) in 23S rRNA + 2 reduced [2Fe-2S]-[ferredoxin] + 2 S-adenosyl-L-methionine = 2-methyladenosine(2503) in 23S rRNA + 5'-deoxyadenosine + L-methionine + 2 oxidized [2Fe-2S]-[ferredoxin] + S-adenosyl-L-homocysteine. It catalyses the reaction adenosine(37) in tRNA + 2 reduced [2Fe-2S]-[ferredoxin] + 2 S-adenosyl-L-methionine = 2-methyladenosine(37) in tRNA + 5'-deoxyadenosine + L-methionine + 2 oxidized [2Fe-2S]-[ferredoxin] + S-adenosyl-L-homocysteine. Specifically methylates position 2 of adenine 2503 in 23S rRNA and position 2 of adenine 37 in tRNAs. This is Probable dual-specificity RNA methyltransferase RlmN from Finegoldia magna (strain ATCC 29328 / DSM 20472 / WAL 2508) (Peptostreptococcus magnus).